A 123-amino-acid chain; its full sequence is Large ribosomal subunit protein uL22c (123 aa).

The protein belongs to the universal ribosomal protein uL22 family. As to quaternary structure, part of the 50S ribosomal subunit.

The protein localises to the plastid. It is found in the chloroplast. Its function is as follows. This protein binds specifically to 23S rRNA. Functionally, the globular domain of the protein is located near the polypeptide exit tunnel on the outside of the subunit, while an extended beta-hairpin is found that lines the wall of the exit tunnel in the center of the 70S ribosome. This Chara vulgaris (Common stonewort) protein is Large ribosomal subunit protein uL22c (rpl22).